A 377-amino-acid polypeptide reads, in one-letter code: DNA replication and repair protein RecF (377 aa).

30–37 (GQNAQGKS) contributes to the ATP binding site.

It belongs to the RecF family.

Its subcellular location is the cytoplasm. The RecF protein is involved in DNA metabolism; it is required for DNA replication and normal SOS inducibility. RecF binds preferentially to single-stranded, linear DNA. It also seems to bind ATP. The protein is DNA replication and repair protein RecF of Cyanothece sp. (strain PCC 7425 / ATCC 29141).